The chain runs to 661 residues: MPLPSRASSTPKISKACVPCRTRKIKCNAAVVGLPCGSCVSRECPDDCVLSARKRRTVKVRNAEAPRSRKNIPDTNGSVLSPRQQQLPTNVSRQTTDSSHSDPVEESIHASHTGSSLRNDTPHSRDRRPPGQAQADLLYLNILQDTVNDTSAAQTDASDHQSNDEPDDSFNSQIHHWNPPPQLDDVDNEYLAKKKVFELPPPRFMDDIVKAYFDYVHPFAPILNRTDFIQSYRLGTCCLFLLHAVAAAASLYVTHDVLLGCGYPDRSTAQASFFSKAKLFHDFHCQGDPLSMLQGSMILGAIILDHPSDRDFQYWFHNSVRRASKMGVQNACLRDDGSQKLYRRIWWVLHNRDIFHFFINTQNMRLLANAPPIRPLTEADWETEDIEQWSGILSPISQAQKVSLIAQCELAQIFGNVMSVVTSSTPSAEEIHKRILPLDAWRTSLPDRMQLMASFADGEIYHLEALTTSYRFECIMCRLLRRGRWQMSDGGLREWAQQRFRSAIFELDTIVKRVMINNTIQKLPTTFITTITALLALHIESALDAAESSLIRSMARISVQHTMLALDQIRDTPAIKRALPAFEIVLSKNKLYPTSSSDTEQINTMQAISQDQTLNDGHILQPAQADMTLPQDDQSFLYGDFIGFDFLDRWQMEQLDFTGIY.

The zn(2)-C6 fungal-type DNA-binding region spans 17–48 (CVPCRTRKIKCNAAVVGLPCGSCVSRECPDDC). 2 disordered regions span residues 57-131 (TVKV…RPPG) and 151-184 (SAAQ…PQLD). Polar residues predominate over residues 73–98 (PDTNGSVLSPRQQQLPTNVSRQTTDS). The span at 99–109 (SHSDPVEESIH) shows a compositional bias: basic and acidic residues. Over residues 110 to 119 (ASHTGSSLRN) the composition is skewed to polar residues. Over residues 120-129 (DTPHSRDRRP) the composition is skewed to basic and acidic residues.

The protein localises to the nucleus. Its function is as follows. Efflux pump involved in export of biosynthesis of fusaric acid, a mycotoxin with low to moderate toxicity to animals and humans, but with high phytotoxic properties. Constitutes a self-protecting mechanism of the fungus against critical levels of FSA within the cell. In Fusarium oxysporum f. sp. lycopersici (strain 4287 / CBS 123668 / FGSC 9935 / NRRL 34936) (Fusarium vascular wilt of tomato), this protein is Fusaric acid cluster transcription factor FUB12.